The sequence spans 488 residues: Malonate-semialdehyde dehydrogenase (488 aa).

Residues Ala-150, Phe-152, Lys-176, Glu-179, Arg-180, Ser-229, and Thr-251 each coordinate NAD(+). The Nucleophile role is filled by Cys-284. NAD(+) is bound at residue Glu-382.

Belongs to the aldehyde dehydrogenase family. IolA subfamily. Homotetramer.

The enzyme catalyses 3-oxopropanoate + NAD(+) + CoA + H2O = hydrogencarbonate + acetyl-CoA + NADH + H(+). It carries out the reaction 2-methyl-3-oxopropanoate + NAD(+) + CoA + H2O = propanoyl-CoA + hydrogencarbonate + NADH + H(+). It functions in the pathway polyol metabolism; myo-inositol degradation into acetyl-CoA; acetyl-CoA from myo-inositol: step 7/7. Its function is as follows. Catalyzes the oxidation of malonate semialdehyde (MSA) and methylmalonate semialdehyde (MMSA) into acetyl-CoA and propanoyl-CoA, respectively. Is involved in a myo-inositol catabolic pathway. Bicarbonate, and not CO2, is the end-product of the enzymatic reaction. The protein is Malonate-semialdehyde dehydrogenase of Listeria monocytogenes serotype 4a (strain HCC23).